The primary structure comprises 448 residues: Gamete and mating-type specific protein A (448 aa).

The first 19 residues, 1-19 (MKLILVLLCLISTLFVVKG), serve as a signal peptide directing secretion. Residues 30 to 157 (VSYHNKWRSS…PDKSEVSCSY (128 aa)) form the SCP domain. 3 N-linked (GlcNAc...) asparagine glycosylation sites follow: N55, N98, and N119. A disordered region spans residues 171–242 (PKTTTPAPTT…PTTPAPTSTL (72 aa)). Residues 178–236 (PTTPAPTTPKPTTPAPTTPKPTTPAPTTPKPTTPAPTTPKPTTPAPTTPKPTTPAPTTP) show a composition bias toward pro residues. Catalysis depends on residues C262, H397, and N415.

This sequence belongs to the peptidase C1 family.

It is found in the secreted. Its function is as follows. Thiol protease that seems to be involved in the sexual development. In Dictyostelium discoideum (Social amoeba), this protein is Gamete and mating-type specific protein A (gmsA).